We begin with the raw amino-acid sequence, 418 residues long: Serine hydroxymethyltransferase (418 aa).

Residues L121 and 125–127 each bind (6S)-5,6,7,8-tetrahydrofolate; that span reads GHL. Position 230 is an N6-(pyridoxal phosphate)lysine (K230). (6S)-5,6,7,8-tetrahydrofolate is bound by residues E246 and 355–357; that span reads SPF.

Belongs to the SHMT family. Homodimer. It depends on pyridoxal 5'-phosphate as a cofactor.

It localises to the cytoplasm. It catalyses the reaction (6R)-5,10-methylene-5,6,7,8-tetrahydrofolate + glycine + H2O = (6S)-5,6,7,8-tetrahydrofolate + L-serine. It participates in one-carbon metabolism; tetrahydrofolate interconversion. Its pathway is amino-acid biosynthesis; glycine biosynthesis; glycine from L-serine: step 1/1. Functionally, catalyzes the reversible interconversion of serine and glycine with tetrahydrofolate (THF) serving as the one-carbon carrier. This reaction serves as the major source of one-carbon groups required for the biosynthesis of purines, thymidylate, methionine, and other important biomolecules. Also exhibits THF-independent aldolase activity toward beta-hydroxyamino acids, producing glycine and aldehydes, via a retro-aldol mechanism. The protein is Serine hydroxymethyltransferase of Streptococcus pneumoniae serotype 19F (strain G54).